A 1014-amino-acid chain; its full sequence is Disease resistance protein RGA4 (1014 aa).

The tract at residues 1–182 (MEAALLSGFI…PRIHEADLVG (182 aa)) is structured coiled coil (CC) domain. Positions 105 to 145 (RTVRATKKLLQTNQHLAQELQRLKRMVEEANQRKQRYTAAA) form a coiled coil. The NB-ARC domain occupies 189–466 (ELLEQLAERQ…WLAEGFVEPV (278 aa)). LRR repeat units follow at residues 484-506 (RNIIEPINVSNNDKVKTCQTYGM), 507-530 (MREFISHMSISQNFVTFFCDDKFL), 531-552 (PKYVRRLSLHGDTVVNGDNFNG), 580-602 (LRVLDLEKCDDLNDDHLKEICNL), 603-624 (VLLKYLSLGGNISKLPKDIAKL), 625-647 (KDLEALDVRRSKVKIMPVEVFGL), 701-725 (MNKLRKLKIWCTSSAGSTDWTDLRE), 762-784 (PCYLSSLKLHGNFPQLPQFVTSL), 785-807 (RGLKELCLSSTKFTTGLLEALSN), 808-833 (LSYLQYLKLVADELEKFIIKVQGFPR), and 854-877 (LPFLVTLQLLCKDLHGLSDIKIEC).

It belongs to the disease resistance NB-LRR family. Expressed in leaves.

Probable disease resistance protein. Resistance proteins guard the plant against pathogens that contain an appropriate avirulence protein via an indirect interaction with this avirulence protein. That triggers a defense system including the hypersensitive response, which restricts the pathogen growth. At the opposite of cultivars Aichi asahi and Sasanishiki, the cultivars Nipponbare, Mokoto and Hitomebore don't recognize the effector avirulence protein AVR-Pia from M.oryzae. The polypeptide is Disease resistance protein RGA4 (Oryza sativa subsp. japonica (Rice)).